The following is a 356-amino-acid chain: tRNA N6-adenosine threonylcarbamoyltransferase (356 aa).

Fe cation contacts are provided by H115 and H119. Residues 138–142 (LVSGG), D171, G184, and N283 each bind substrate. Position 311 (D311) interacts with Fe cation.

It belongs to the KAE1 / TsaD family. Requires Fe(2+) as cofactor.

It localises to the cytoplasm. The catalysed reaction is L-threonylcarbamoyladenylate + adenosine(37) in tRNA = N(6)-L-threonylcarbamoyladenosine(37) in tRNA + AMP + H(+). Required for the formation of a threonylcarbamoyl group on adenosine at position 37 (t(6)A37) in tRNAs that read codons beginning with adenine. Is involved in the transfer of the threonylcarbamoyl moiety of threonylcarbamoyl-AMP (TC-AMP) to the N6 group of A37, together with TsaE and TsaB. TsaD likely plays a direct catalytic role in this reaction. This is tRNA N6-adenosine threonylcarbamoyltransferase from Synechococcus sp. (strain WH7803).